The primary structure comprises 84 residues: Small ribosomal subunit protein bS16 (84 aa).

The protein belongs to the bacterial ribosomal protein bS16 family.

The polypeptide is Small ribosomal subunit protein bS16 (Methylococcus capsulatus (strain ATCC 33009 / NCIMB 11132 / Bath)).